The primary structure comprises 74 residues: Molt-inhibiting hormone (74 aa).

Position 1 is a pyrrolidone carboxylic acid (glutamine 1). Cystine bridges form between cysteine 7–cysteine 43, cysteine 23–cysteine 39, and cysteine 26–cysteine 52. Valine 72 carries the post-translational modification Valine amide.

The protein resides in the secreted. In terms of biological role, inhibits Y-organs where molting hormone (ecdysteroid) is secreted. A molting cycle is initiated when MIH secretion diminishes or stops. This Procambarus bouvieri (Mexican crayfish) protein is Molt-inhibiting hormone.